A 307-amino-acid chain; its full sequence is Acetyl-coenzyme A carboxylase carboxyl transferase subunit beta (307 aa).

One can recognise a CoA carboxyltransferase N-terminal domain in the interval 28-297 (LWVKCPDTGQ…TPQPGTAPEP (270 aa)). Residues 286–307 (RRTPQPGTAPEPTTPEPLPNAA) form a disordered region. A compositionally biased stretch (pro residues) spans 292–307 (GTAPEPTTPEPLPNAA).

Belongs to the AccD/PCCB family. As to quaternary structure, acetyl-CoA carboxylase is a heterohexamer composed of biotin carboxyl carrier protein (AccB), biotin carboxylase (AccC) and two subunits each of ACCase subunit alpha (AccA) and ACCase subunit beta (AccD).

It localises to the cytoplasm. The catalysed reaction is N(6)-carboxybiotinyl-L-lysyl-[protein] + acetyl-CoA = N(6)-biotinyl-L-lysyl-[protein] + malonyl-CoA. Its pathway is lipid metabolism; malonyl-CoA biosynthesis; malonyl-CoA from acetyl-CoA: step 1/1. Component of the acetyl coenzyme A carboxylase (ACC) complex. Biotin carboxylase (BC) catalyzes the carboxylation of biotin on its carrier protein (BCCP) and then the CO(2) group is transferred by the transcarboxylase to acetyl-CoA to form malonyl-CoA. This chain is Acetyl-coenzyme A carboxylase carboxyl transferase subunit beta, found in Methylorubrum extorquens (strain CM4 / NCIMB 13688) (Methylobacterium extorquens).